The chain runs to 121 residues: Two-component response regulator ORR12 (121 aa).

One can recognise a Response regulatory domain in the interval 5-121 (HVLVVDDTLV…VDLPRILNYI (117 aa)). Position 55 is a 4-aspartylphosphate (D55).

Belongs to the ARR family. Type-A subfamily. Two-component system major event consists of a His-to-Asp phosphorelay between a sensor histidine kinase (HK) and a response regulator (RR). In plants, the His-to-Asp phosphorelay involves an additional intermediate named Histidine-containing phosphotransfer protein (HPt). This multistep phosphorelay consists of a His-Asp-His-Asp sequential transfer of a phosphate group between first a His and an Asp of the HK protein, followed by the transfer to a conserved His of the HPt protein and finally the transfer to an Asp in the receiver domain of the RR protein. As to expression, expressed in flowers and panicles.

Functionally, functions as a response regulator involved in His-to-Asp phosphorelay signal transduction system. Phosphorylation of the Asp residue in the receiver domain activates the ability of the protein to promote the transcription of target genes. Type-A response regulators seem to act as negative regulators of the cytokinin signaling. The sequence is that of Two-component response regulator ORR12 from Oryza sativa subsp. japonica (Rice).